The following is a 281-amino-acid chain: Tryptophan 2,3-dioxygenase (281 aa).

Residues 50-54 (FIIQH), Y112, and R116 contribute to the substrate site. H239 contacts heme. T253 lines the substrate pocket.

The protein belongs to the tryptophan 2,3-dioxygenase family. As to quaternary structure, homotetramer. It depends on heme as a cofactor.

The enzyme catalyses L-tryptophan + O2 = N-formyl-L-kynurenine. It functions in the pathway amino-acid degradation; L-tryptophan degradation via kynurenine pathway; L-kynurenine from L-tryptophan: step 1/2. Functionally, heme-dependent dioxygenase that catalyzes the oxidative cleavage of the L-tryptophan (L-Trp) pyrrole ring and converts L-tryptophan to N-formyl-L-kynurenine. Catalyzes the oxidative cleavage of the indole moiety. The polypeptide is Tryptophan 2,3-dioxygenase (Saccharopolyspora erythraea (strain ATCC 11635 / DSM 40517 / JCM 4748 / NBRC 13426 / NCIMB 8594 / NRRL 2338)).